A 119-amino-acid chain; its full sequence is Holo-[acyl-carrier-protein] synthase (119 aa).

Mg(2+) contacts are provided by Asp8 and Glu58.

The protein belongs to the P-Pant transferase superfamily. AcpS family. The cofactor is Mg(2+).

The protein localises to the cytoplasm. It carries out the reaction apo-[ACP] + CoA = holo-[ACP] + adenosine 3',5'-bisphosphate + H(+). Transfers the 4'-phosphopantetheine moiety from coenzyme A to a Ser of acyl-carrier-protein. This chain is Holo-[acyl-carrier-protein] synthase, found in Bacillus cereus (strain ATCC 14579 / DSM 31 / CCUG 7414 / JCM 2152 / NBRC 15305 / NCIMB 9373 / NCTC 2599 / NRRL B-3711).